The primary structure comprises 375 residues: uncharacterized protein (375 aa).

Lysine 99 is covalently cross-linked (Isoglutamyl lysine isopeptide (Lys-Gln) (interchain with Q-Cter in protein Pup)).

The protein belongs to the IMPDH/GMPR family.

This is an uncharacterized protein from Mycolicibacterium smegmatis (strain ATCC 700084 / mc(2)155) (Mycobacterium smegmatis).